Reading from the N-terminus, the 340-residue chain is Uroporphyrinogen decarboxylase (340 aa).

Residues 21 to 25 (RQAGR), D71, Y147, S202, and H315 each bind substrate.

This sequence belongs to the uroporphyrinogen decarboxylase family. As to quaternary structure, homodimer.

It localises to the cytoplasm. The catalysed reaction is uroporphyrinogen III + 4 H(+) = coproporphyrinogen III + 4 CO2. Its pathway is porphyrin-containing compound metabolism; protoporphyrin-IX biosynthesis; coproporphyrinogen-III from 5-aminolevulinate: step 4/4. Its function is as follows. Catalyzes the decarboxylation of four acetate groups of uroporphyrinogen-III to yield coproporphyrinogen-III. This is Uroporphyrinogen decarboxylase from Nautilia profundicola (strain ATCC BAA-1463 / DSM 18972 / AmH).